A 288-amino-acid chain; its full sequence is Probable prolyl 4-hydroxylase 9 (288 aa).

Residues 1-12 (MKSRLKSYRRKK) are Cytoplasmic-facing. Residues 13–33 (LGLATVIVFCSLCFLFGFYGS) form a helical; Signal-anchor for type II membrane protein membrane-spanning segment. At 34-288 (TLLSQNVPRV…KWIRDQDQEE (255 aa)) the chain is on the lumenal side. Residues 164 to 283 (HGESFNILRY…KWVATKWIRD (120 aa)) enclose the Fe2OG dioxygenase domain. Fe cation-binding residues include histidine 182 and aspartate 184. N-linked (GlcNAc...) asparagine glycans are attached at residues asparagine 221 and asparagine 255. Histidine 264 provides a ligand contact to Fe cation. Lysine 274 contributes to the 2-oxoglutarate binding site.

The protein belongs to the P4HA family. Fe(2+) is required as a cofactor. L-ascorbate serves as cofactor.

The protein resides in the endoplasmic reticulum membrane. Its subcellular location is the golgi apparatus. It carries out the reaction L-prolyl-[collagen] + 2-oxoglutarate + O2 = trans-4-hydroxy-L-prolyl-[collagen] + succinate + CO2. Functionally, catalyzes the post-translational formation of 4-hydroxyproline in -Xaa-Pro-Gly- sequences in proline-rich peptide sequences of plant glycoproteins and other proteins. Hydroxyprolines are important constituent of many plant cell wall glycoproteins such as extensins, hydroxyproline-rich glycoproteins, lectins and arabinogalactan proteins. The chain is Probable prolyl 4-hydroxylase 9 from Arabidopsis thaliana (Mouse-ear cress).